We begin with the raw amino-acid sequence, 308 residues long: Cytochrome b (308 aa).

Helical transmembrane passes span 1–21, 45–66, 81–101, and 146–166; these read FGSL…LLAM, WLIR…YLHI, WNIG…GYVL, and FFAF…VHLT. The heme b site is built by His51 and His65. Residues His150 and His164 each contribute to the heme b site. His169 contacts a ubiquinone. Helical transmembrane passes span 194–214, 256–276, and 288–308; these read IKDL…ALFS, LGGV…PLLH, and LSQI…WVGS.

The protein belongs to the cytochrome b family. The cytochrome bc1 complex contains 11 subunits: 3 respiratory subunits (MT-CYB, CYC1 and UQCRFS1), 2 core proteins (UQCRC1 and UQCRC2) and 6 low-molecular weight proteins (UQCRH/QCR6, UQCRB/QCR7, UQCRQ/QCR8, UQCR10/QCR9, UQCR11/QCR10 and a cleavage product of UQCRFS1). This cytochrome bc1 complex then forms a dimer. Heme b is required as a cofactor.

It is found in the mitochondrion inner membrane. Component of the ubiquinol-cytochrome c reductase complex (complex III or cytochrome b-c1 complex) that is part of the mitochondrial respiratory chain. The b-c1 complex mediates electron transfer from ubiquinol to cytochrome c. Contributes to the generation of a proton gradient across the mitochondrial membrane that is then used for ATP synthesis. The sequence is that of Cytochrome b (MT-CYB) from Corvus corax (Common raven).